A 377-amino-acid polypeptide reads, in one-letter code: Homoserine O-succinyltransferase (377 aa).

An AB hydrolase-1 domain is found at 45–356 (NAVLVCHALN…PHGHDAFLLD (312 aa)). The active-site Nucleophile is the S151. R221 contributes to the substrate binding site. Catalysis depends on residues D317 and H350. D351 is a substrate binding site.

It belongs to the AB hydrolase superfamily. MetX family. Homodimer.

The protein localises to the cytoplasm. It catalyses the reaction L-homoserine + succinyl-CoA = O-succinyl-L-homoserine + CoA. It functions in the pathway amino-acid biosynthesis; L-methionine biosynthesis via de novo pathway; O-succinyl-L-homoserine from L-homoserine: step 1/1. Transfers a succinyl group from succinyl-CoA to L-homoserine, forming succinyl-L-homoserine. The polypeptide is Homoserine O-succinyltransferase (Leptothrix cholodnii (strain ATCC 51168 / LMG 8142 / SP-6) (Leptothrix discophora (strain SP-6))).